A 300-amino-acid polypeptide reads, in one-letter code: MSAPTVVGQRDPEKAWAYKKDVAWYRTELSEETIGPMRPILELYSKVPPESVVEWIKTVRDKAWEVYPYGTIGMFGFLTLSLPTHPSYPDILASLQSGKKTFLDIGCCVGQELRSLTYAGVPSENLYGVDLHQGFLDIGYELFRDSETLKSTLLAADVFDENSEVLKDVEGKIDVVHAGSFFHLFDWDQQVTAAKRVVRLLRPQPGSILVGKQAGDVNAGQKSRPGKLGSRYRHNAESWKKLWQQVAAETGTQWEVSVRELEDKEYFREMTGGVDLAKVKSYGDWNPETTRRIEFLFRRA.

S-adenosyl-L-methionine-binding positions include 130–131 (DL) and 157–158 (DV).

It belongs to the class I-like SAM-binding methyltransferase superfamily. In terms of assembly, homodimer.

It carries out the reaction phomoidride A + S-adenosyl-L-methionine = (-)-phomoidride B + methanol + S-adenosyl-L-homocysteine + H(+). It functions in the pathway secondary metabolite biosynthesis. Functionally, O-methyltransferase; part of the gene cluster that mediates the biosynthesis of the antihypercholesterolemic agents phomoidrides which are dimeric anhydrides. Within the pathway, phiE catalyzes the acetalization reaction that converts phomoidride A to phomoidride B. The pathway begins with the highly reducing polyketide synthase phiA that catalyzes the formation of a C12-fatty acyl-ACP, starting from one acetate and 5 malonate units. The hydrolase phiM is involved in the release of the C12-fatty acyl chain from phiA. The alkylcitrate synthase (ACS) phiJ and the alkylcitrate dehydratase (ACDH) phiI then give rise to decarboxylated monomeric anhydrides by coupling the C12-fatty acyl chain with oxalacetic acid. The cyclase phiC is responsible for the dimerization of the monomeric anhydrides which leads to the production of prephomoidride that contains the characteristic bicyclo[4.3.1]deca-1,6-diene system of phomoidrides. Iterative oxidation catalyzed by the alpha-ketoglutarate-dependent dioxygenase phiK produced then phomoidride A. Finally, the methyltransferase phiE converts phomoidride A to phomoidride B via an acetalization reaction. The phosphatidylethanolamine-binding protein phiB and phiN are not essential for dimerization and their functions have still to be determined. The protein is O-methyltransferase phiE of Fungal sp. (strain ATCC 74256).